Consider the following 424-residue polypeptide: STAM-binding protein (424 aa).

The interval 1 to 127 is interaction with CHMP3; the sequence is MSDHGDVSLP…YEQYKERKKK (127 aa). Residues Ser-2 and Ser-48 each carry the phosphoserine modification. An interaction with STAM region spans residues 227 to 231; it reads PAKPP. Ser-243 is modified (phosphoserine). Positions 257–388 constitute an MPN domain; sequence IVVPRNLCSE…LTDYGLQEIS (132 aa). Residues His-335, His-337, Asp-348, His-350, Cys-390, His-396, and His-398 each coordinate Zn(2+). Positions 335–348 match the JAMM motif motif; that stretch reads HTHPTQTAFLSSVD.

It belongs to the peptidase M67C family. Interacts with STAM. Interacts with SMAD6 and SMAD7. Interacts with CHMP3; the interaction appears to relieve the autoinhibition of CHMP3. Interacts with SMURF2 and RNF11; this interaction promotes ubiquitination. The cofactor is Zn(2+). In terms of processing, phosphorylated after BMP type I receptor activation. Post-translationally, ubiquitinated by SMURF2 in the presence of RNF11. In terms of tissue distribution, expressed in brain.

Its subcellular location is the nucleus. The protein resides in the membrane. It localises to the cytoplasm. The protein localises to the early endosome. Inhibited by N-ethylmaleimide. In terms of biological role, zinc metalloprotease that specifically cleaves 'Lys-63'-linked polyubiquitin chains. Does not cleave 'Lys-48'-linked polyubiquitin chains. Plays a role in signal transduction for cell growth and MYC induction mediated by IL-2 and GM-CSF. Potentiates BMP (bone morphogenetic protein) signaling by antagonizing the inhibitory action of SMAD6 and SMAD7. Has a key role in regulation of cell surface receptor-mediated endocytosis and ubiquitin-dependent sorting of receptors to lysosomes. Endosomal localization of STAMBP is required for efficient EGFR degradation but not for its internalization. Involved in the negative regulation of PI3K-AKT-mTOR and RAS-MAP signaling pathways. This chain is STAM-binding protein (Stambp), found in Mus musculus (Mouse).